Consider the following 80-residue polypeptide: Polcalcin Cyn d 7 (80 aa).

EF-hand domains lie at 2-37 (ADTGDMEHIFKRFDTNGDGKISLAELTDALRTLGST) and 40-72 (DEVQRMMAEIDTDGDGFIDFDEFISFCNANPGL). Positions 15, 17, 19, 21, 26, 50, 52, 54, and 61 each coordinate Ca(2+).

This Cynodon dactylon (Bermuda grass) protein is Polcalcin Cyn d 7.